Here is a 375-residue protein sequence, read N- to C-terminus: Biotin synthase, mitochondrial (375 aa).

The N-terminal 16 residues, 1–16 (MMSTIYRHLSTARPAL), are a transit peptide targeting the mitochondrion. One can recognise a Radical SAM core domain in the interval 81-310 (HDPTKVQLCT…IATARIVMPK (230 aa)). 3 residues coordinate [4Fe-4S] cluster: C99, C103, and C106. Positions 143, 176, 236, and 314 each coordinate [2Fe-2S] cluster.

The protein belongs to the radical SAM superfamily. Biotin synthase family. It depends on [4Fe-4S] cluster as a cofactor. [2Fe-2S] cluster serves as cofactor.

It localises to the mitochondrion. It catalyses the reaction (4R,5S)-dethiobiotin + (sulfur carrier)-SH + 2 reduced [2Fe-2S]-[ferredoxin] + 2 S-adenosyl-L-methionine = (sulfur carrier)-H + biotin + 2 5'-deoxyadenosine + 2 L-methionine + 2 oxidized [2Fe-2S]-[ferredoxin]. The protein operates within cofactor biosynthesis; biotin biosynthesis; biotin from 7,8-diaminononanoate: step 2/2. This Saccharomyces cerevisiae (strain ATCC 204508 / S288c) (Baker's yeast) protein is Biotin synthase, mitochondrial (BIO2).